The chain runs to 93 residues: MKQWVLVKTFESLFAELTERAATRPEGSGTVAALDAGVHSQGKKILEEAGEVWIAAEHESDEALAEEISQLLYWTQVLMVGKGLKLEDVYRHL.

This sequence belongs to the PRA-PH family.

It is found in the cytoplasm. The catalysed reaction is 1-(5-phospho-beta-D-ribosyl)-ATP + H2O = 1-(5-phospho-beta-D-ribosyl)-5'-AMP + diphosphate + H(+). It functions in the pathway amino-acid biosynthesis; L-histidine biosynthesis; L-histidine from 5-phospho-alpha-D-ribose 1-diphosphate: step 2/9. In Rhodococcus jostii (strain RHA1), this protein is Phosphoribosyl-ATP pyrophosphatase.